A 504-amino-acid chain; its full sequence is D-alanine--D-alanyl carrier protein ligase (504 aa).

152 to 153 is a binding site for ATP; that stretch reads TS. Asp-197 is a D-alanine binding site. 292–297 is a binding site for ATP; that stretch reads NTYGPT. Val-301 contributes to the D-alanine binding site. Residues Asp-383, 394–397, and Lys-492 contribute to the ATP site; that span reads YNGR. Lys-492 serves as a coordination point for D-alanine.

It belongs to the ATP-dependent AMP-binding enzyme family. DltA subfamily.

It is found in the cytoplasm. The enzyme catalyses holo-[D-alanyl-carrier protein] + D-alanine + ATP = D-alanyl-[D-alanyl-carrier protein] + AMP + diphosphate. The protein operates within cell wall biogenesis; lipoteichoic acid biosynthesis. Catalyzes the first step in the D-alanylation of lipoteichoic acid (LTA), the activation of D-alanine and its transfer onto the D-alanyl carrier protein (Dcp) DltC. In an ATP-dependent two-step reaction, forms a high energy D-alanyl-AMP intermediate, followed by transfer of the D-alanyl residue as a thiol ester to the phosphopantheinyl prosthetic group of the Dcp. D-alanylation of LTA plays an important role in modulating the properties of the cell wall in Gram-positive bacteria, influencing the net charge of the cell wall. In Bacillus thuringiensis (strain Al Hakam), this protein is D-alanine--D-alanyl carrier protein ligase.